The primary structure comprises 79 residues: Cell division protein ZapB (79 aa).

Residues 4–78 adopt a coiled-coil conformation; the sequence is EVFEKLEAKV…LRALLGKMEE (75 aa).

The protein belongs to the ZapB family. In terms of assembly, homodimer. The ends of the coiled-coil dimer bind to each other, forming polymers. Interacts with FtsZ.

It localises to the cytoplasm. Its function is as follows. Non-essential, abundant cell division factor that is required for proper Z-ring formation. It is recruited early to the divisome by direct interaction with FtsZ, stimulating Z-ring assembly and thereby promoting cell division earlier in the cell cycle. Its recruitment to the Z-ring requires functional FtsA or ZipA. The chain is Cell division protein ZapB from Erwinia tasmaniensis (strain DSM 17950 / CFBP 7177 / CIP 109463 / NCPPB 4357 / Et1/99).